A 313-amino-acid chain; its full sequence is Intelectin-1a (313 aa).

The first 18 residues, 1–18 (MTQLGFLLFIMVATRGCS), serve as a signal peptide directing secretion. Residues 32–251 (SFFSSLPRSC…NNERAASALC (220 aa)) enclose the Fibrinogen C-terminal domain. Cysteines 41 and 70 form a disulfide. Ca(2+) contacts are provided by histidine 86, glutamate 87, asparagine 89, glycine 92, glycine 97, aspartate 98, and aspartate 133. Disulfide bonds link cysteine 94–cysteine 280, cysteine 199–cysteine 259, and cysteine 251–cysteine 265. Ca(2+)-binding residues include asparagine 260, glutamate 262, glutamate 274, and aspartate 282. A carbohydrate is bound by residues 262–263 (EH) and glutamate 274. A lipid anchor (GPI-anchor amidated serine) is attached at serine 298. Residues 299-313 (SSRKITEAAVLLFYR) constitute a propeptide that is removed on maturation.

Monomer. May interact with LTF. In terms of tissue distribution, expressed in small intestinal Paneth cells in uninfected mice. Expression also detected in various other tissues including stomach, kidney, ovary and brain.

It is found in the cell membrane. The protein localises to the secreted. Its function is as follows. Lectin that specifically recognizes microbial carbohydrate chains in a calcium-dependent manner. Binds to microbial glycans that contain a terminal acyclic 1,2-diol moiety, including beta-linked D-galactofuranose (beta-Galf), D-phosphoglycerol-modified glycans, D-glycero-D-talo-oct-2-ulosonic acid (KO) and 3-deoxy-D-manno-oct-2-ulosonic acid (KDO). Binds to glycans from Gram-positive and Gram-negative bacteria, including K.pneumoniae, S.pneumoniae, Y.pestis, P.mirabilis and P.vulgaris. Does not bind mammalian glycans. Probably plays a role in the defense system against microorganisms. May function as adipokine that has no effect on basal glucose uptake but enhances insulin-stimulated glucose uptake in adipocytes. Increases AKT phosphorylation in the absence and presence of insulin. May interact with lactoferrin/LTF and increase its uptake, and may thereby play a role in iron absorption. In Mus musculus (Mouse), this protein is Intelectin-1a (Itln1).